The primary structure comprises 157 residues: MNDVVKIVEDFIKPHIPKPFELFAVEWEKFGGDMMLSILVDKEGGIEIDETAELSELISPLLDTISPDPFPTEGYLLEVASPGAERPLRKAEHFAGAVGEYIFVKLYQKINNEKEFTGDLVSFDGETLVVDVLDKTRHKNIEIPLSAVAKAQTMVKF.

This sequence belongs to the RimP family.

It is found in the cytoplasm. In terms of biological role, required for maturation of 30S ribosomal subunits. This chain is Ribosome maturation factor RimP, found in Lactococcus lactis subsp. cremoris (strain MG1363).